The following is a 213-amino-acid chain: Histone H1.2 (213 aa).

A compositionally biased stretch (low complexity) spans 1–17; sequence MSETAPAAPAAAPPAEK. The interval 1–41 is disordered; that stretch reads MSETAPAAPAAAPPAEKAPVKKKAAKKAGGTPRKASGPPVS. S2 carries the N-acetylserine; partial modification. At S2 the chain carries Phosphoserine. K17 is subject to N6-acetyllysine. K23, K26, and K27 each carry N6-(2-hydroxyisobutyryl)lysine. An N6-(beta-hydroxybutyryl)lysine; alternate modification is found at K34. The residue at position 34 (K34) is an N6-crotonyllysine; alternate. K34 is subject to N6-methyllysine; alternate. Residues 36–109 enclose the H15 domain; sequence SGPPVSELIT…GASGSFKLNK (74 aa). K46 bears the N6-(2-hydroxyisobutyryl)lysine mark. An N6-(beta-hydroxybutyryl)lysine; alternate modification is found at K52. At K52 the chain carries N6-(2-hydroxyisobutyryl)lysine; alternate. The residue at position 54 (R54) is a Citrulline. K63 is modified (N6-(2-hydroxyisobutyryl)lysine). K64 carries the post-translational modification N6-(beta-hydroxybutyryl)lysine; alternate. Position 64 is an N6-crotonyllysine; alternate (K64). K64 is modified (N6-(2-hydroxyisobutyryl)lysine; alternate). An N6-(2-hydroxyisobutyryl)lysine mark is found at K75 and K81. N6-(beta-hydroxybutyryl)lysine; alternate is present on residues K85 and K90. An N6-crotonyllysine; alternate mark is found at K85, K90, and K97. N6-(2-hydroxyisobutyryl)lysine; alternate occurs at positions 85, 90, and 97. A disordered region spans residues 92 to 213; that stretch reads TLVQTKGTGA…KPKKAAPKKK (122 aa). K97 carries the N6-succinyllysine; alternate modification. S104 carries the phosphoserine; by PKC modification. Position 106 is an N6-(beta-hydroxybutyryl)lysine (K106). Residues K110, K117, K121, K129, and K136 each carry the N6-(2-hydroxyisobutyryl)lysine modification. Residues 119–140 show a composition bias toward basic residues; it reads KVKKAGGTKPKKPVGAAKKPKK. Position 146 is a phosphothreonine (T146). K148 carries the N6-(2-hydroxyisobutyryl)lysine modification. A compositionally biased stretch (basic residues) spans 149 to 160; the sequence is KSAKKTPKKAKK. 2 positions are modified to N6-crotonyllysine; alternate: K159 and K168. Residues K159 and K168 each carry the N6-(2-hydroxyisobutyryl)lysine; alternate modification. Residues 169-186 show a composition bias toward basic residues; the sequence is KVAKSPKKAKVAKPKKAA. K187 carries the N6-methyllysine; by EHMT1 and EHMT2 modification. S188 is modified (ADP-ribosylserine). Basic residues predominate over residues 193–213; that stretch reads VKPKAAKPKVVKPKKAAPKKK. K213 carries the post-translational modification N6-(2-hydroxyisobutyryl)lysine.

Belongs to the histone H1/H5 family. As to quaternary structure, interacts with TSC22D1 isoforms 2 and 5. Post-translationally, H1 histones are progressively phosphorylated during the cell cycle, becoming maximally phosphorylated during late G2 phase and M phase, and being dephosphorylated sharply thereafter. In terms of processing, crotonylation (Kcr) is specifically present in male germ cells and marks testis-specific genes in post-meiotic cells, including X-linked genes that escape sex chromosome inactivation in haploid cells. Crotonylation marks active promoters and enhancers and confers resistance to transcriptional repressors. It is also associated with post-meiotically activated genes on autosomes. Citrullination at Arg-54 (H1R54ci) by PADI4 takes place within the DNA-binding site of H1 and results in its displacement from chromatin and global chromatin decondensation, thereby promoting pluripotency and stem cell maintenance. Post-translationally, ADP-ribosylated on Ser-188 in response to DNA damage.

The protein localises to the nucleus. It is found in the chromosome. Functionally, histone H1 protein binds to linker DNA between nucleosomes forming the macromolecular structure known as the chromatin fiber. Histones H1 are necessary for the condensation of nucleosome chains into higher-order structured fibers. Also acts as a regulator of individual gene transcription through chromatin remodeling, nucleosome spacing and DNA methylation. The protein is Histone H1.2 of Homo sapiens (Human).